A 363-amino-acid polypeptide reads, in one-letter code: DNA replication and repair protein RecF (363 aa).

30–37 (GPNGSGKT) is a binding site for ATP.

This sequence belongs to the RecF family.

It localises to the cytoplasm. Its function is as follows. The RecF protein is involved in DNA metabolism; it is required for DNA replication and normal SOS inducibility. RecF binds preferentially to single-stranded, linear DNA. It also seems to bind ATP. This Chlorobium limicola (strain DSM 245 / NBRC 103803 / 6330) protein is DNA replication and repair protein RecF.